A 299-amino-acid polypeptide reads, in one-letter code: 33 kDa chaperonin (299 aa).

2 cysteine pairs are disulfide-bonded: Cys234–Cys236 and Cys268–Cys271.

The protein belongs to the HSP33 family. Post-translationally, under oxidizing conditions two disulfide bonds are formed involving the reactive cysteines. Under reducing conditions zinc is bound to the reactive cysteines and the protein is inactive.

The protein localises to the cytoplasm. Redox regulated molecular chaperone. Protects both thermally unfolding and oxidatively damaged proteins from irreversible aggregation. Plays an important role in the bacterial defense system toward oxidative stress. This is 33 kDa chaperonin from Pseudomonas putida (strain ATCC 700007 / DSM 6899 / JCM 31910 / BCRC 17059 / LMG 24140 / F1).